A 729-amino-acid chain; its full sequence is Cytoplasmic polyadenylation element-binding protein 4 (729 aa).

2 disordered regions span residues 20–50 (FPVR…NNTA) and 78–133 (EKAK…KEKL). Positions 24-35 (FHPHLQPPHHHQ) are enriched in basic residues. Residues 83 to 96 (QQQEQQDPLEKQQL) show a composition bias toward low complexity. Serine 97, serine 99, and serine 137 each carry phosphoserine. Residues 218 to 324 (FGGSFSPQIG…RDHRRGLNGG (107 aa)) form a disordered region. Positions 232 to 249 (HHPHHPHFQHHHSQHQQQ) are enriched in basic residues. Serine 252 and serine 255 each carry phosphoserine. A compositionally biased stretch (low complexity) spans 285–300 (WSSYQSPSPTPSSSWS). The span at 301 to 311 (PGGGGYGGWGA) shows a compositional bias: gly residues. Threonine 326 bears the Phosphothreonine mark. Residues serine 330 and serine 332 each carry the phosphoserine modification. RRM domains lie at 472 to 563 (RKVF…PWNL) and 580 to 662 (KTIF…PYVL). The segment at 541–543 (KLY) is RNA-binding. The Zn(2+) site is built by cysteine 667, cysteine 675, cysteine 684, cysteine 689, cysteine 694, cysteine 697, histidine 702, and histidine 710.

It belongs to the RRM CPEB family. In terms of assembly, interacts with TOB1. In terms of tissue distribution, highly expressed in brain, including hippocampus, amygdala, granule and Purkinje cells of the cerebellum (at protein level). Expressed in spinal cord (at protein level). Expressed in kidney, lung and heart (at protein level). Expressed in liver (at protein level). Expressed in spleen and testis (at protein level). Weakly expressed in ovary and in granular cells of dentate gyrus and the pyramidal cells of CA3 and CA1 of the hippocampus.

The protein localises to the cytoplasm. It is found in the cell projection. Its subcellular location is the dendrite. It localises to the dendritic spine. The protein resides in the postsynaptic density. The protein localises to the axon. It is found in the growth cone. Its subcellular location is the endoplasmic reticulum. It localises to the perinuclear region. Sequence-specific RNA-binding protein that binds to the cytoplasmic polyadenylation element (CPE), an uridine-rich sequence element (consensus sequence 5'-UUUUUAU-3') within the mRNA 3'-UTR. RNA binding results in a clear conformational change analogous to the Venus fly trap mechanism. Regulates activation of unfolded protein response (UPR) in the process of adaptation to ER stress in liver, by maintaining translation of CPE-regulated mRNAs in conditions in which global protein synthesis is inhibited. Required for cell cycle progression, specifically for cytokinesis and chromosomal segregation. Plays a role as an oncogene promoting tumor growth and progression by positively regulating translation of t-plasminogen activator/PLAT. Stimulates proliferation of melanocytes. In contrast to CPEB1 and CPEB3, does not play role in synaptic plasticity, learning and memory. This Mus musculus (Mouse) protein is Cytoplasmic polyadenylation element-binding protein 4 (Cpeb4).